The chain runs to 348 residues: Glucose 1-dehydrogenase 2 (348 aa).

Cysteine 39 serves as a coordination point for Zn(2+). Threonine 41 is a binding site for substrate. Positions 64 and 65 each coordinate Zn(2+). Positions 110 and 146 each coordinate substrate. Glutamate 146 is a binding site for Zn(2+). NADP(+)-binding positions include 178–181, 260–262, and 289–291; these read AGPV, LGV, and SVN. Asparagine 291 contacts substrate.

Belongs to the zinc-containing alcohol dehydrogenase family. Glucose 1-dehydrogenase subfamily. Requires Zn(2+) as cofactor.

The enzyme catalyses D-glucose + NAD(+) = D-glucono-1,5-lactone + NADH + H(+). It carries out the reaction D-glucose + NADP(+) = D-glucono-1,5-lactone + NADPH + H(+). Catalyzes the NAD(P)(+)-dependent oxidation of D-glucose to D-gluconate via gluconolactone. Can utilize both NAD(+) and NADP(+) as electron acceptor. Is involved in the degradation of glucose through a non-phosphorylative variant of the Entner-Doudoroff pathway. The sequence is that of Glucose 1-dehydrogenase 2 from Vulcanisaeta moutnovskia (strain 768-28).